The following is a 353-amino-acid chain: Phenol hydroxylase P5 protein (353 aa).

Residues 3–93 (YQVTIEPIGT…DMVIEADVDE (91 aa)) enclose the 2Fe-2S ferredoxin-type domain. Positions 37, 42, 45, and 77 each coordinate [2Fe-2S] cluster. The 100-residue stretch at 102 to 201 (VQDYQATVIE…SGPYGQFFVR (100 aa)) folds into the FAD-binding FR-type domain.

In terms of assembly, the multicomponent enzyme phenol hydroxylase is formed by P0, P1, P2, P3, P4 and P5 polypeptides. FAD serves as cofactor. [2Fe-2S] cluster is required as a cofactor.

It catalyses the reaction phenol + NADPH + O2 + H(+) = catechol + NADP(+) + H2O. The protein operates within aromatic compound metabolism; phenol degradation. Functionally, catabolizes phenol, and some of its methylated derivatives. P5 is required for growth on phenol, and for in vitro phenol hydroxylase activity. In terms of biological role, probable electron transfer from NADPH, via FAD and the 2Fe-2S center, to the oxygenase activity site of the enzyme. The sequence is that of Phenol hydroxylase P5 protein (mphP) from Acinetobacter pittii (strain PHEA-2).